Consider the following 959-residue polypeptide: Isoleucine--tRNA ligase (959 aa).

A 'HIGH' region motif is present at residues 60–70; sequence PYANGSLHIGH. Glutamate 571 serves as a coordination point for L-isoleucyl-5'-AMP. Positions 612–616 match the 'KMSKS' region motif; the sequence is KMSKS. ATP is bound at residue lysine 615. Zn(2+)-binding residues include cysteine 928, cysteine 931, cysteine 948, and cysteine 951.

Belongs to the class-I aminoacyl-tRNA synthetase family. IleS type 1 subfamily. In terms of assembly, monomer. The cofactor is Zn(2+).

Its subcellular location is the cytoplasm. The catalysed reaction is tRNA(Ile) + L-isoleucine + ATP = L-isoleucyl-tRNA(Ile) + AMP + diphosphate. Catalyzes the attachment of isoleucine to tRNA(Ile). As IleRS can inadvertently accommodate and process structurally similar amino acids such as valine, to avoid such errors it has two additional distinct tRNA(Ile)-dependent editing activities. One activity is designated as 'pretransfer' editing and involves the hydrolysis of activated Val-AMP. The other activity is designated 'posttransfer' editing and involves deacylation of mischarged Val-tRNA(Ile). The polypeptide is Isoleucine--tRNA ligase (Nostoc punctiforme (strain ATCC 29133 / PCC 73102)).